A 124-amino-acid polypeptide reads, in one-letter code: Small ribosomal subunit protein bS6 (124 aa).

Residues 96–124 (ETGPSPMMKEVQREEAKKAAAAQPTEAQA) are disordered. Residues 114–124 (AAAAQPTEAQA) show a composition bias toward low complexity.

This sequence belongs to the bacterial ribosomal protein bS6 family.

In terms of biological role, binds together with bS18 to 16S ribosomal RNA. This is Small ribosomal subunit protein bS6 from Burkholderia mallei (strain ATCC 23344).